Consider the following 32-residue polypeptide: Dermatoxin-J1 (32 aa).

Q32 carries the glutamine amide modification.

Expressed by the skin glands.

Its subcellular location is the secreted. Its function is as follows. Antimicrobial peptide. This chain is Dermatoxin-J1, found in Phasmahyla jandaia (Jandaia leaf frog).